The following is a 663-amino-acid chain: MAPIEIPRGQASYKKREGIITLTPDKTALIWSPLPGTGPPVISLSVSNITNLQQTPKTNPKVVLRVVEKPKAPGADPAAYPFQFTHATEARNEADAIKDLLSQIIAELRGDDPSLPKPAKSGPNGAGASAAMAMASAVNSKHLPFRWFEDDMLKADVELQQSLMKKDKALAHIYNDAKLSKPDSLSDASFNSQFWATRISLLRAYAIELNQKKGSYNVLSTIKPRTENGELKLNINHEQVQLIFQQHPLVKRIYNENVPKLTESEFWSRFFLSRLSKKLRGERITDNDNTDPLFDKYLEADNTMAVPAKITATSVPPIINIEGNEENQGGFRGGNLKDVEMRPRANIPIIKTLNSLSEKIMANVAPTDVDPSAASYSKDGIADALSKQLALQDLRGDAEAQLIRLSVKDTSTFFTGNQPSLTDQEAADARLYATQVPSDVLFEVQADMDTLDSDGRGGIDLHRSIGVDPDSDDEGNNSLDSKSGPKPQHVGSRAALRFAQNQILESMKSARSHLTTTTTHGGSHTTTTNASEERPMSLPTDIAHRATLTCATTAEFLKQFWTVFNNSSNSSPEKQQELAYLADSLVRSKQRIEALADEAEKRRQEIMEKRKREIREYYQKTGRKAKWVPVGGGRDAVWAAFEGVVGGLERAVAVWEMVKSGRI.

2 consecutive BSD domains span residues 147 to 206 and 227 to 278; these read WFED…RAYA and ENGE…LSKK. Disordered regions lie at residues 452 to 491 and 513 to 535; these read DSDGRGGIDLHRSIGVDPDSDDEGNNSLDSKSGPKPQHVG and HLTTTTTHGGSHTTTTNASEERP. The span at 453–465 shows a compositional bias: basic and acidic residues; the sequence is SDGRGGIDLHRSI. Over residues 515–528 the composition is skewed to low complexity; that stretch reads TTTTTHGGSHTTTT.

Belongs to the TFB1 family. Component of the 7-subunit TFIIH core complex composed of XPB/rad25, XPD/dnr-10, tcf-30/SSL1, tcf-29/TFB1, tcf-11/TFB2, tcf-14/TFB4 and rtf-1/TFB5, which is active in NER. The core complex associates with the 3-subunit CTD-kinase module TFIIK composed of div-66/cyclin H, prk-3/KIN28 and rtf-2/TFB3 to form the 10-subunit holoenzyme (holo-TFIIH) active in transcription.

The protein resides in the nucleus. Functionally, component of the general transcription and DNA repair factor IIH (TFIIH) core complex, which is involved in general and transcription-coupled nucleotide excision repair (NER) of damaged DNA and, when complexed to TFIIK, in RNA transcription by RNA polymerase II. In NER, TFIIH acts by opening DNA around the lesion to allow the excision of the damaged oligonucleotide and its replacement by a new DNA fragment. In transcription, TFIIH has an essential role in transcription initiation. When the pre-initiation complex (PIC) has been established, TFIIH is required for promoter opening and promoter escape. Phosphorylation of the C-terminal tail (CTD) of the largest subunit of RNA polymerase II by the kinase module TFIIK controls the initiation of transcription. This chain is General transcription and DNA repair factor IIH subunit tcf-29 (tcf-29), found in Neurospora crassa (strain ATCC 24698 / 74-OR23-1A / CBS 708.71 / DSM 1257 / FGSC 987).